The following is a 96-amino-acid chain: Co-chaperonin GroES (96 aa).

The protein belongs to the GroES chaperonin family. In terms of assembly, heptamer of 7 subunits arranged in a ring. Interacts with the chaperonin GroEL.

It localises to the cytoplasm. Functionally, together with the chaperonin GroEL, plays an essential role in assisting protein folding. The GroEL-GroES system forms a nano-cage that allows encapsulation of the non-native substrate proteins and provides a physical environment optimized to promote and accelerate protein folding. GroES binds to the apical surface of the GroEL ring, thereby capping the opening of the GroEL channel. In Idiomarina loihiensis (strain ATCC BAA-735 / DSM 15497 / L2-TR), this protein is Co-chaperonin GroES.